Consider the following 93-residue polypeptide: Large ribosomal subunit protein uL23cz/uL23cy (93 aa).

This sequence belongs to the universal ribosomal protein uL23 family. Part of the 50S ribosomal subunit.

It localises to the plastid. The protein localises to the chloroplast. In terms of biological role, binds to 23S rRNA. The chain is Large ribosomal subunit protein uL23cz/uL23cy (rpl23-A) from Drimys granadensis.